Consider the following 610-residue polypeptide: Elongation factor 4 (610 aa).

Residues 7 to 189 (SRIRNFSIIA…AIVQRIPPPK (183 aa)) enclose the tr-type G domain. Residues 19–24 (DHGKST) and 136–139 (NKID) each bind GTP.

It belongs to the TRAFAC class translation factor GTPase superfamily. Classic translation factor GTPase family. LepA subfamily.

The protein resides in the cell inner membrane. It catalyses the reaction GTP + H2O = GDP + phosphate + H(+). In terms of biological role, required for accurate and efficient protein synthesis under certain stress conditions. May act as a fidelity factor of the translation reaction, by catalyzing a one-codon backward translocation of tRNAs on improperly translocated ribosomes. Back-translocation proceeds from a post-translocation (POST) complex to a pre-translocation (PRE) complex, thus giving elongation factor G a second chance to translocate the tRNAs correctly. Binds to ribosomes in a GTP-dependent manner. The protein is Elongation factor 4 of Thermus thermophilus (strain ATCC BAA-163 / DSM 7039 / HB27).